A 694-amino-acid chain; its full sequence is Beta-mannosyltransferase 8 (694 aa).

At 1–11 (MKFPKLRKRTV) the chain is on the cytoplasmic side. Residues 12–29 (YWAVLTVFALFTIHFVFQ) form a helical membrane-spanning segment. At 30-694 (YKEHNSHRVQ…YLYDHASVNS (665 aa)) the chain is on the extracellular side. N-linked (GlcNAc...) asparagine glycans are attached at residues N101 and N542.

This sequence belongs to the BMT family.

Its subcellular location is the membrane. Functionally, beta-mannosyltransferase involved in cell wall biosynthesis through beta-1,2-mannosylation of cell wall phosphopeptidomannan. Plays a role in the ability to produce hyphae in the presence of three bacterial species. This chain is Beta-mannosyltransferase 8 (BMT8), found in Candida albicans (strain SC5314 / ATCC MYA-2876) (Yeast).